The primary structure comprises 55 residues: Bowman-Birk type proteinase inhibitor B1 (55 aa).

Disulfide bonds link C6–C53, C12–C17, C26–C33, and C30–C45.

Belongs to the Bowman-Birk serine protease inhibitor family. As to expression, expressed in bulb (at protein level).

In terms of biological role, serine protease inhibitor. Weakly inhibits trypsin (Ki = 167 nM). Does not inhibit bacterial subtilisin or mamallian chymotrypsin. The chain is Bowman-Birk type proteinase inhibitor B1 from Hyacinthus orientalis (Common hyacinth).